A 240-amino-acid polypeptide reads, in one-letter code: Probable transcriptional regulatory protein SO_3401 (240 aa).

This sequence belongs to the TACO1 family.

The protein localises to the cytoplasm. In Shewanella oneidensis (strain ATCC 700550 / JCM 31522 / CIP 106686 / LMG 19005 / NCIMB 14063 / MR-1), this protein is Probable transcriptional regulatory protein SO_3401.